The primary structure comprises 287 residues: T-cell ecto-ADP-ribosyltransferase 1 (287 aa).

The first 20 residues, 1–20, serve as a signal peptide directing secretion; the sequence is MPSNNFKFFLTWWLTQQVTG. Disulfide bonds link Cys-41-Cys-246, Cys-80-Cys-201, and Cys-141-Cys-193. The TR mART core domain maps to 61-241; sequence EELKLEWEKA…ISLDSPKRKK (181 aa). Residues Tyr-98 and Arg-146 each contribute to the NAD(+) site. Active-site residues include Arg-146 and Ser-167. A glycan (N-linked (GlcNAc...) asparagine) is linked at Asn-171. Ser-202 contributes to the NAD(+) binding site. Glu-209 is a catalytic residue. The N-linked (GlcNAc...) asparagine glycan is linked to Asn-256. A lipid anchor (GPI-anchor amidated serine) is attached at Ser-258. Positions 259 to 287 are cleaved as a propeptide — removed in mature form; that stretch reads SLGSRESCVSLFLVVLLGLLVQQLTLAEP.

It belongs to the Arg-specific ADP-ribosyltransferase family. Post-translationally, it is proposed that in the absence of reducing agents, a disulfide bond is formed between Cys-80 and Cys-201, leading to a conformational change that reduces the catalytic rate of NAD glycohydrolysis. Expressed in spleen, intestine and thymus.

The protein localises to the cell membrane. The enzyme catalyses L-arginyl-[protein] + NAD(+) = N(omega)-(ADP-D-ribosyl)-L-arginyl-[protein] + nicotinamide + H(+). It catalyses the reaction NAD(+) + H2O = ADP-D-ribose + nicotinamide + H(+). In terms of biological role, has both ADP-ribosyltransferase activity and thiol-dependent NAD(+) glycohydrolase activity. This is T-cell ecto-ADP-ribosyltransferase 1 (Art2a) from Mus musculus (Mouse).